Here is a 688-residue protein sequence, read N- to C-terminus: Complement C1s subcomponent (688 aa).

A signal peptide spans 1-15 (MWCIVLFSLLAWVYA). Residues 16 to 130 (EPTMYGEILS…TGFAAYYVAT (115 aa)) form the CUB 1 domain. Ca(2+) contacts are provided by Glu60, Asp68, Asp113, Asp131, Ile132, and Glu134. Cysteines 65 and 83 form a disulfide. Positions 131 to 172 (DINECTDFVDVPCSHFCNNFIGGYFCSCPPEYFLHDDMKNCG) constitute an EGF-like; calcium-binding domain. 3 cysteine pairs are disulfide-bonded: Cys135/Cys147, Cys143/Cys156, and Cys158/Cys171. Positions 149, 150, and 153 each coordinate Ca(2+). Asn149 is subject to (3R)-3-hydroxyasparagine. An N-linked (GlcNAc...) asparagine glycan is attached at Asn174. A disulfide bridge links Cys175 with Cys202. The CUB 2 domain occupies 175–290 (CSGDVFTALI…KGWKLRYHGD (116 aa)). 5 residues coordinate Ca(2+): Glu226, Asp236, Asp275, Gly278, and Gln279. Cys234 and Cys251 are joined by a disulfide. Sushi domains follow at residues 292 to 356 (MPCP…KCQP) and 357 to 423 (VDCG…KCVP). Disulfide bonds link Cys294–Cys341, Cys321–Cys354, Cys359–Cys403, Cys386–Cys421, Cys425–Cys549, Cys595–Cys618, and Cys628–Cys659. A glycan (N-linked (GlcNAc...) asparagine) is linked at Asn406. The 243-residue stretch at 438–680 (IIGGSDADIK…YVDWIMKTMQ (243 aa)) folds into the Peptidase S1 domain. Catalysis depends on charge relay system residues His475 and Asp529. Ser632 acts as the Charge relay system in catalysis.

Belongs to the peptidase S1 family. In terms of assembly, core component of the complement C1 complex, a calcium-dependent complex composed of 1 molecule of the C1Q subcomplex, 2 molecules of C1R and 2 molecules of C1S. The C1Q subcomplex is composed 18 subunits: 3 chains of C1QA, C1QB, and C1QC trimerize to form 6 collagen-like triple helices connected to six globular ligand-recognition modules. In terms of processing, cleaved and activated by C1R to generate Complement C1s subcomponent heavy and light chains. Post-translationally, the iron and 2-oxoglutarate dependent 3-hydroxylation of aspartate and asparagine is (R) stereospecific within EGF domains.

It localises to the secreted. The protein resides in the cell surface. The enzyme catalyses Cleavage of Arg-|-Ala bond in complement component C4 to form C4a and C4b, and Lys(or Arg)-|-Lys bond in complement component C2 to form C2a and C2b: the 'classical' pathway C3 convertase.. Its activity is regulated as follows. Cleaved and activated by C1R. Immunoglobulin-binding promotes autoactivation of C1R, which results in the cleavage of the Arg-Ile bond in the catalytic domain. Inhibited by C1 inhibitor (SERPING1). In terms of biological role, component of the complement C1 complex, a multiprotein complex that initiates the classical pathway of the complement system, a cascade of proteins that leads to phagocytosis and breakdown of pathogens and signaling that strengthens the adaptive immune system. C1S is activated following association of the C1 complex with immunoglobulins (IgG or IgM) complexed with antigens to form antigen-antibody complexes on the surface of pathogens. C1S is cleaved and activated by C1R to generate C1s subcomponent heavy and light chains. C1s subcomponent light chain then cleaves and activates C2 and C4, the next components of the classical complement pathway. Serine protease component of the complement C1 complex, which catalyzes cleavage and activation of C2 and C4, the next components of the classical complement pathway. Also able to cleave C1 inhibitor (SERPING1) in vitro; additional evidence is however required to confirm this result in vivo. Also cleaves IGFBP5 and thereby inhibits the trophic effects of IGF1. The polypeptide is Complement C1s subcomponent (Homo sapiens (Human)).